The chain runs to 646 residues: Depudecin biosynthesis cluster-specific transcription activator DEP6 (646 aa).

The segment at residues 16-43 (CEICRERKVRCDRALPKCRRCDRLNQPC) is a DNA-binding region (zn(2)-C6 fungal-type). Disordered stretches follow at residues 76 to 130 (TTAA…SQSQ) and 345 to 366 (KSEH…LALP). Positions 349–360 (SQGMQNRETQSG) are enriched in polar residues.

It is found in the nucleus. In terms of biological role, transcription factor that positively regulates the expression of the gene cluster that mediates the biosynthesis of depudecin, a highly oxidized eleven-carbon linear polyketide that acts as a histone deacetylase (HDAC) inhibitor and makes a small contribution to pathogenesis. The sequence is that of Depudecin biosynthesis cluster-specific transcription activator DEP6 from Alternaria brassicicola (Dark leaf spot agent).